A 2147-amino-acid polypeptide reads, in one-letter code: Non-reducing polyketide synthase albA (2147 aa).

The tract at residues 8 to 244 (YLFGDQTSDI…VKAPIHGPYH (237 aa)) is N-terminal acylcarrier protein transacylase domain (SAT). One can recognise a Ketosynthase family 3 (KS3) domain in the interval 375-806 (CSKIAIIGMS…GGNTAILLED (432 aa)). Catalysis depends on for beta-ketoacyl synthase activity residues Cys547, His682, and His724. Residues 912–1232 (FVFTGQGAQY…LSSLHLAGID (321 aa)) form a malonyl-CoA:ACP transacylase (MAT) domain region. Ser1001 (for acyl/malonyl transferase activity) is an active-site residue. The interval 1286–1425 (HEFLTTAAQK…CTVRFFDCAA (140 aa)) is N-terminal hotdog fold. In terms of domain architecture, PKS/mFAS DH spans 1286-1598 (HEFLTTAAQK…FQGLSRKILD (313 aa)). The segment at 1290 to 1603 (TTAAQKVIET…RKILDTVLPP (314 aa)) is product template (PT) domain. Catalysis depends on His1326, which acts as the Proton acceptor; for dehydratase activity. Residues 1452-1598 (DAHRLGRGMV…FQGLSRKILD (147 aa)) are C-terminal hotdog fold. The Proton donor; for dehydratase activity role is filled by Asp1511. A disordered region spans residues 1608–1637 (KGPARPAASAQKAAPAATSKSRASAPAPAK). The span at 1610–1637 (PARPAASAQKAAPAATSKSRASAPAPAK) shows a compositional bias: low complexity. Positions 1642-1719 (PSAPSLVKRA…DFKQFLAPMS (78 aa)) constitute a Carrier 1 domain. Ser1679 carries the O-(pantetheine 4'-phosphoryl)serine modification. The interval 1719–1759 (SQGEASDGSTSDPESSSSFNGGSSTDESSAGSPVSSPPNEK) is disordered. The span at 1724 to 1747 (SDGSTSDPESSSSFNGGSSTDESS) shows a compositional bias: low complexity. The region spanning 1760–1837 (IEQHATMKEI…DVEDALGLKP (78 aa)) is the Carrier 2 domain. The residue at position 1797 (Ser1797) is an O-(pantetheine 4'-phosphoryl)serine. Residues 1873-2145 (SPHPRSTSIL…ELGSFIGNAM (273 aa)) form a claisen cyclase domain region. The active-site For Claisen cyclase activity is Ser1963.

The enzyme catalyses 6 malonyl-CoA + acetyl-CoA + 6 H(+) = naphtopyrone YWA1 + 6 CO2 + 7 CoA + H2O. It participates in secondary metabolite biosynthesis. Non-reducing polyketide synthase involved in the biosynthesis of bifonsecin B, a dimeric gamma-naphthopyrone. The first step in the biosynthesis of bifonsecin B is the production of gamma-naphthopyrone precursor YWA1 by the non-reducing polyketide synthase albA, via condensation of one acetyl-CoA starter unit with 6 malonyl-CoA units. YWA1 is then methylated by bfoE at position C-6 to yield foncesin which is further methylated at position C-8 by bfoD to produce fonsecin B. A key enzyme in the biosynthetic pathway is the cytochrome P450 monooxygenase bfoB which catalyzes the oxidative dimerization of fonsecin B to bifonsecin B. Bfob also catalyzes the oxidative dimerization of rubrofusarin B into nigerone. The stereoselectivity of bfoB is influenced by the two natural monomeric substrates; homodimerization of fonsecin B yields a stereochemically pure biaryl, M-foncerine B, while rubrofusarin B yields a mixture of enantiomers M- and P-nigerone. The chain is Non-reducing polyketide synthase albA from Aspergillus brasiliensis (strain CBS 101740 / IMI 381727 / IBT 21946).